Here is a 320-residue protein sequence, read N- to C-terminus: Lipoyl synthase (320 aa).

Residues 1-27 (MRVEIDHRNSGGGKLRHPEKQHRPDNP) are disordered. Over residues 16-25 (RHPEKQHRPD) the composition is skewed to basic and acidic residues. Residues Cys-61, Cys-66, Cys-72, Cys-87, Cys-91, Cys-94, and Ser-300 each coordinate [4Fe-4S] cluster. Residues 73-289 (WSQRHATMMI…AAMARAKGFL (217 aa)) enclose the Radical SAM core domain.

This sequence belongs to the radical SAM superfamily. Lipoyl synthase family. [4Fe-4S] cluster is required as a cofactor.

Its subcellular location is the cytoplasm. It catalyses the reaction [[Fe-S] cluster scaffold protein carrying a second [4Fe-4S](2+) cluster] + N(6)-octanoyl-L-lysyl-[protein] + 2 oxidized [2Fe-2S]-[ferredoxin] + 2 S-adenosyl-L-methionine + 4 H(+) = [[Fe-S] cluster scaffold protein] + N(6)-[(R)-dihydrolipoyl]-L-lysyl-[protein] + 4 Fe(3+) + 2 hydrogen sulfide + 2 5'-deoxyadenosine + 2 L-methionine + 2 reduced [2Fe-2S]-[ferredoxin]. It participates in protein modification; protein lipoylation via endogenous pathway; protein N(6)-(lipoyl)lysine from octanoyl-[acyl-carrier-protein]: step 2/2. Catalyzes the radical-mediated insertion of two sulfur atoms into the C-6 and C-8 positions of the octanoyl moiety bound to the lipoyl domains of lipoate-dependent enzymes, thereby converting the octanoylated domains into lipoylated derivatives. This chain is Lipoyl synthase, found in Acidiphilium cryptum (strain JF-5).